The primary structure comprises 177 residues: Large ribosomal subunit protein uL6 (177 aa).

Part of the 50S ribosomal subunit.

Its function is as follows. This protein binds to the 23S rRNA, and is important in its secondary structure. It is located near the subunit interface in the base of the L7/L12 stalk, and near the tRNA binding site of the peptidyltransferase center. In Rhodopseudomonas palustris (strain ATCC BAA-98 / CGA009), this protein is Large ribosomal subunit protein uL6.